Here is a 128-residue protein sequence, read N- to C-terminus: Early 3 14.7 kDa protein (128 aa).

The protein belongs to the adenoviridae E3_15 family. As to quaternary structure, may bind to host IKBKG, OPTN and RRAGA.

The protein localises to the host cytoplasm. It is found in the host nucleus. Functionally, may prevent Nf-kappaB activation by immune signals like Tumor necrosis factor, presumably by inhibiting NFKB1 dimer DNA-binding. May act directly at the TNF receptor to inhibit signaling. This chain is Early 3 14.7 kDa protein, found in Human adenovirus C serotype 2 (HAdV-2).